The primary structure comprises 168 residues: Thiosulfate dehydrogenase [quinone] small subunit (168 aa).

Residues 6–26 (IIGIIFAILVVGWILATGQWA) traverse the membrane as a helical segment.

Heterodimer of a large and a small subunit in a 2:2 stoichiometry. TQO may associate with the terminal oxidase formed by doxBCE. In terms of processing, the N-terminus is blocked. Post-translationally, glycosylated.

It is found in the cell membrane. The catalysed reaction is 6-decylubiquinone + 2 thiosulfate = 6-decylubiquinol + tetrathionate. Its activity is regulated as follows. Inhibited by sulfite, metabisulfite and dithonite. TQO plays a role in sulfur oxidation and is proposed to couple sulfur oxidation to dioxygen reduction; caldariellaquinone or sulfolobus quinone seem to serve to transfer electrons to the electron transport chain terminal oxidase formed by DoxBCE. This Acidianus ambivalens (Desulfurolobus ambivalens) protein is Thiosulfate dehydrogenase [quinone] small subunit (doxA).